The chain runs to 477 residues: Bifunctional protein HldE (477 aa).

The interval 1 to 318 (MKVTLPEFER…ENAVRGRADT (318 aa)) is ribokinase. 195-198 (NLSE) contacts ATP. Residue Asp-264 is part of the active site. The cytidylyltransferase stretch occupies residues 344–477 (MTNGVFDILH…IKKIQKDSDK (134 aa)).

In the N-terminal section; belongs to the carbohydrate kinase PfkB family. It in the C-terminal section; belongs to the cytidylyltransferase family. In terms of assembly, homodimer.

It carries out the reaction D-glycero-beta-D-manno-heptose 7-phosphate + ATP = D-glycero-beta-D-manno-heptose 1,7-bisphosphate + ADP + H(+). It catalyses the reaction D-glycero-beta-D-manno-heptose 1-phosphate + ATP + H(+) = ADP-D-glycero-beta-D-manno-heptose + diphosphate. It participates in nucleotide-sugar biosynthesis; ADP-L-glycero-beta-D-manno-heptose biosynthesis; ADP-L-glycero-beta-D-manno-heptose from D-glycero-beta-D-manno-heptose 7-phosphate: step 1/4. Its pathway is nucleotide-sugar biosynthesis; ADP-L-glycero-beta-D-manno-heptose biosynthesis; ADP-L-glycero-beta-D-manno-heptose from D-glycero-beta-D-manno-heptose 7-phosphate: step 3/4. In terms of biological role, catalyzes the phosphorylation of D-glycero-D-manno-heptose 7-phosphate at the C-1 position to selectively form D-glycero-beta-D-manno-heptose-1,7-bisphosphate. Functionally, catalyzes the ADP transfer from ATP to D-glycero-beta-D-manno-heptose 1-phosphate, yielding ADP-D-glycero-beta-D-manno-heptose. The polypeptide is Bifunctional protein HldE (Citrobacter koseri (strain ATCC BAA-895 / CDC 4225-83 / SGSC4696)).